The sequence spans 1024 residues: MKFFALFIQRPVATTLLTLAITLSGIIGFSLLPVSPLPQVDYPVIMVSASMPGADPETMASSVATPLERALGRIAGVNEMTSTSSLGSTRIILQFDLNRDINGAARDVQAALNAAQSLLPSGMPSRPTYRKMNPSDAPIMIMTLTSDTFSQGQLYDYASTKLAQKIAQTEGVSDVTVGGSSLPAVRVELNPSALFNQGVSLDAVRQAISAANVRRPQGSVDAAETHWQVQANDEIKTAEGYRPLIVHYNNGSPVRLQDVANVIDSVQDVRNAGMSAGQPAVLLVISREPGANIIATVDRIRAELPALRASIPASIQLNIAQDRSPTIRASLDEVERSLVIAVALVILVVFIFLRSGRATLIPAVAVPVSLIGTFAAMYLCGFSLNNLSLMALTIATGFVVDDAIVVLENISRHLEAGVKPMVAALRGVREVGFTVLSMSISLVAVFIPLLLMAGLPGRLFREFAVTLSVAIGISLVISLTLTPMMCAWLLRSHPKGQQQRIRGFGKVLLAIQQGYGRSLNWALSHTRWVMVVLLSTIALNVWLYISIPKTFFPEQDTGRMMGFIQADQSISFQSMQQKLKDFMQIVGADPAVDSVTGFTGGSRTNSGSMFISLKPLSERQETAQQVITRLRGKLAKEPGANLFLSSVQDIRVGGRHSNAAYQFTLLADDLAALREWEPKVRAALAKLPQLADVNSDQQDKGAEMALTYDRETMARLGIDVSEANALLNNAFGQRQISTIYQPLNQYKVVMEVAPEYTQDVSSLDKMFVINSNGQSIPLSYFAKWQPANAPLAVNHQGLSAASTISFNLPDGGSLSEATAAVERAMTELGVPSTVRGAFAGTAQVFQETLKSQLWLIMAAIATVYIVLGILYESYVHPLTILSTLPSAGVGALLALELFDAPFSLIALIGIMLLIGIVKKNAIMMVDFALDAQRNGNISAREAIFQASLLRFRPIIMTTLAALFGALPLVLSSGDGAELRQPLGITIVGGLVVSQLLTLYTTPVIYLYFDRLRNRFSKQPLMKLE.

The next 12 membrane-spanning stretches (helical) occupy residues 12 to 32, 333 to 353, 360 to 380, 387 to 407, 435 to 455, 469 to 489, 528 to 548, 853 to 873, 875 to 895, 897 to 917, 953 to 973, and 984 to 1004; these read VATT…FSLL, EVER…FIFL, LIPA…MYLC, LSLM…IVVL, VLSM…MAGL, VAIG…CAWL, WVMV…ISIP, LWLI…LYES, VHPL…LLAL, LFDA…IGIV, PIIM…LSSG, and ITIV…TPVI.

It belongs to the resistance-nodulation-cell division (RND) (TC 2.A.6) family. MdtC subfamily. Part of a tripartite efflux system composed of MdtA, MdtB and MdtC. MdtC forms a heteromultimer with MdtB.

It is found in the cell inner membrane. This Yersinia pseudotuberculosis serotype IB (strain PB1/+) protein is Multidrug resistance protein MdtC.